Here is a 65-residue protein sequence, read N- to C-terminus: Large ribosomal subunit protein uL29 (65 aa).

Belongs to the universal ribosomal protein uL29 family.

In Bacteroides fragilis (strain ATCC 25285 / DSM 2151 / CCUG 4856 / JCM 11019 / LMG 10263 / NCTC 9343 / Onslow / VPI 2553 / EN-2), this protein is Large ribosomal subunit protein uL29.